The primary structure comprises 265 residues: MSGTRCLLGVGLPVDVTATETLTHDEQGPGVEPGPCSRGSSIDGLLPSLLGPHDDVDDDSAAFHKYMTLSRDGAGAIHAPSLVEDASRNDDDDDDEDDDDSSMSRDLSKALDMSSSSSSSPRVQSRRHRSSVSAISAILHQGKSGREDITGSLSVPAEQEKLSFLAKASSIFFRRNSMPRDKHTHSVCPASRPDSERFIVTSAAAQSLRRQQQLEDAQYARVITNFRTIGWCSPSEIESVEYKRSLINAEWDEKISLLSHAQCYK.

Disordered regions lie at residues 21 to 53 (TLTH…LGPH) and 78 to 133 (HAPS…SSVS). Positions 90–101 (DDDDDDEDDDDS) are enriched in acidic residues. The span at 114-123 (SSSSSSSPRV) shows a compositional bias: low complexity. 137–144 (AILHQGKS) serves as a coordination point for ATP.

This is an uncharacterized protein from Saccharomyces cerevisiae (strain ATCC 204508 / S288c) (Baker's yeast).